Consider the following 441-residue polypeptide: Serine carboxypeptidase-like 2 (441 aa).

Positions 1 to 29 (MANKYFSSVLKSLLLLLHLVFLSKQHVDS) are cleaved as a signal peptide. Disulfide bonds link Cys88-Cys331, Cys252-Cys266, and Cys290-Cys297. The N-linked (GlcNAc...) asparagine glycan is linked to Asn109. The active site involves Ser184. Asn350 is a glycosylation site (N-linked (GlcNAc...) asparagine). Residue Asp366 is part of the active site. Asn382 is a glycosylation site (N-linked (GlcNAc...) asparagine). The active site involves His419.

Belongs to the peptidase S10 family. As to expression, expressed in seedlings and roots.

It localises to the secreted. Probable carboxypeptidase. The protein is Serine carboxypeptidase-like 2 (SCPL2) of Arabidopsis thaliana (Mouse-ear cress).